Here is a 169-residue protein sequence, read N- to C-terminus: Diuretic hormone 44 (169 aa).

Positions 1 to 18 (MILLGILASTTIIGLTSS) are cleaved as a signal peptide. Residues 19 to 96 (APLSSYERRD…ARRKQERDQR (78 aa)) constitute a propeptide that is removed on maturation. Positions 83 to 108 (MLELARRKQERDQRQIEENRRFLENI) form a coiled coil. Glutamine 97 is subject to Pyrrolidone carboxylic acid. Position 108 is an isoleucine amide (isoleucine 108). A propeptide spanning residues 109 to 169 (GKRSVPVSDA…RVQANELRLL (61 aa)) is cleaved from the precursor.

Post-translationally, residues Ile-66 to Gly-109 may constitute another form of the DH44 peptide, which has not been detected yet. In terms of tissue distribution, expressed in brain, ventral ganglia and the retrocerebral complex (at protein level).

It is found in the secreted. Its function is as follows. Regulation of fluid secretion. The sequence is that of Diuretic hormone 44 from Camponotus floridanus (Florida carpenter ant).